The chain runs to 88 residues: DNA-directed RNA polymerase subunit omega (88 aa).

It belongs to the RNA polymerase subunit omega family. The RNAP catalytic core consists of 2 alpha, 1 beta, 1 beta' and 1 omega subunit. When a sigma factor is associated with the core the holoenzyme is formed, which can initiate transcription.

It carries out the reaction RNA(n) + a ribonucleoside 5'-triphosphate = RNA(n+1) + diphosphate. Functionally, promotes RNA polymerase assembly. Latches the N- and C-terminal regions of the beta' subunit thereby facilitating its interaction with the beta and alpha subunits. This is DNA-directed RNA polymerase subunit omega from Anaeromyxobacter dehalogenans (strain 2CP-1 / ATCC BAA-258).